A 237-amino-acid polypeptide reads, in one-letter code: Large ribosomal subunit protein uL2 (237 aa).

Residues 1-11 (MGKRIISQNRG) are compositionally biased toward polar residues. 2 disordered regions span residues 1–20 (MGKRIISQNRGKGTPTYRAP) and 201–237 (FGGGKHQHVGKPKTVSRNAPPGRKVGSIAARRTGVRR).

Belongs to the universal ribosomal protein uL2 family. In terms of assembly, part of the 50S ribosomal subunit. Forms a bridge to the 30S subunit in the 70S ribosome.

One of the primary rRNA binding proteins. Required for association of the 30S and 50S subunits to form the 70S ribosome, for tRNA binding and peptide bond formation. It has been suggested to have peptidyltransferase activity; this is somewhat controversial. Makes several contacts with the 16S rRNA in the 70S ribosome. This is Large ribosomal subunit protein uL2 from Archaeoglobus fulgidus (strain ATCC 49558 / DSM 4304 / JCM 9628 / NBRC 100126 / VC-16).